The sequence spans 688 residues: Glycine--tRNA ligase beta subunit (688 aa).

Belongs to the class-II aminoacyl-tRNA synthetase family. In terms of assembly, tetramer of two alpha and two beta subunits.

Its subcellular location is the cytoplasm. The catalysed reaction is tRNA(Gly) + glycine + ATP = glycyl-tRNA(Gly) + AMP + diphosphate. The sequence is that of Glycine--tRNA ligase beta subunit from Colwellia psychrerythraea (strain 34H / ATCC BAA-681) (Vibrio psychroerythus).